A 426-amino-acid polypeptide reads, in one-letter code: Histidine--tRNA ligase (426 aa).

It belongs to the class-II aminoacyl-tRNA synthetase family.

It localises to the cytoplasm. The catalysed reaction is tRNA(His) + L-histidine + ATP = L-histidyl-tRNA(His) + AMP + diphosphate + H(+). The polypeptide is Histidine--tRNA ligase (Sulfurisphaera tokodaii (strain DSM 16993 / JCM 10545 / NBRC 100140 / 7) (Sulfolobus tokodaii)).